Reading from the N-terminus, the 472-residue chain is FAD-dependent monooxygenase ltmM (472 aa).

The helical transmembrane segment at 7–27 (VIIVGGSVAGLSLAHCLEKIG) threads the bilayer. FAD is bound by residues Glu-34, Gly-48, and Arg-107. N-linked (GlcNAc...) asparagine glycosylation is present at Asn-186. 2 residues coordinate FAD: Asp-306 and Ala-319. The chain crosses the membrane as a helical span at residues 450-470 (IVYALYLVAAAAFILYCLSSL).

This sequence belongs to the paxM FAD-dependent monooxygenase family. The cofactor is FAD.

It is found in the membrane. It functions in the pathway secondary metabolite biosynthesis. FAD-dependent monooxygenase; part of the gene cluster that mediates the biosynthesis of lolitrems, indole-diterpene mycotoxins that are potent tremorgens in mammals, and are synthesized by clavicipitaceous fungal endophytes in association with their grass hosts. The geranylgeranyl diphosphate (GGPP) synthase ltmG is proposed to catalyze the first step in lolitremB biosynthesis. LtmG catalyzes a series of iterative condensations of isopentenyl diphosphate (IPP) with dimethylallyl diphosphate (DMAPP), geranyl diphosphate (GPP), and farnesyl diphosphate (FPP), to form GGPP. GGPP then condenses with indole-3-glycerol phosphate to form 3-geranylgeranylindole, an acyclic intermediate, to be incorporated into paxilline. Either ltmG or ltmC could be responsible for this step, as both are putative prenyl transferases. The FAD-dependent monooxygenase ltmM then catalyzes the epoxidation of the two terminal alkenes of the geranylgeranyl moiety, which is subsequently cyclized by ltmB, to paspaline. The cytochrome P450 monooxygenases ltmQ and ltmP can sequentially oxidize paspaline to terpendole E and terpendole F. Alternatively, ltmP converts paspaline to an intermediate which is oxidized by ltmQ to terpendole F. LtmF, ltmK, ltmE and ltmJ appear to be unique to the epichloe endophytes. The prenyltransferase ltmF is involved in the 27-hydroxyl-O-prenylation. The cytochrome P450 monooxygenase ltmK is required for the oxidative acetal ring formation. The multi-functional prenyltransferase ltmE is required for C20- and C21-prenylations of the indole ring of paspalanes and acts together with the cytochrome P450 monooxygenase ltmJ to yield lolitremanes by multiple oxidations and ring closures. The stereoisomer pairs of lolitriol and lolitrem N or lolitrem B and lolitrem F may be attributed to variations in the way in which ring closure can occur under the action of ltmJ. While the major product of this pathway is lolitrem B, the prenyl transferases and cytochrome P450 monooxygenases identified in this pathway have a remarkable versatility in their regio- and stereo-specificities to generate a diverse range of metabolites that are products of a metabolic grid rather than a linear pathway. The sequence is that of FAD-dependent monooxygenase ltmM (ltmM) from Epichloe festucae var. lolii (Neotyphodium lolii).